The chain runs to 139 residues: FAD synthase (139 aa).

ATP-binding positions include 9–10 (TF), 14–17 (HPGH), and D92.

This sequence belongs to the archaeal FAD synthase family. Homodimer. Requires a divalent metal cation as cofactor.

The catalysed reaction is FMN + ATP + H(+) = FAD + diphosphate. Its pathway is cofactor biosynthesis; FAD biosynthesis; FAD from FMN: step 1/1. Functionally, catalyzes the transfer of the AMP portion of ATP to flavin mononucleotide (FMN) to produce flavin adenine dinucleotide (FAD) coenzyme. This is FAD synthase from Methanosarcina barkeri (strain Fusaro / DSM 804).